The chain runs to 1070 residues: Alpha-glucosidase (1070 aa).

The N-terminal stretch at 1–35 (MRSIKAASLTPLLAALFTTLSSTLALPSSVWEHQL) is a signal peptide. N-linked (GlcNAc...) asparagine glycans are attached at residues asparagine 48, asparagine 99, asparagine 144, asparagine 161, asparagine 208, asparagine 384, asparagine 458, asparagine 480, and asparagine 513. Residue aspartate 526 is the Nucleophile of the active site. Residue glutamate 529 is part of the active site. Asparagine 544, asparagine 566, asparagine 574, asparagine 578, and asparagine 635 each carry an N-linked (GlcNAc...) asparagine glycan. Residue aspartate 730 is the Proton donor of the active site. Asparagine 818, asparagine 885, asparagine 916, asparagine 983, asparagine 992, asparagine 996, asparagine 1008, asparagine 1029, asparagine 1043, and asparagine 1052 each carry an N-linked (GlcNAc...) asparagine glycan.

This sequence belongs to the glycosyl hydrolase 31 family.

The enzyme catalyses Hydrolysis of terminal, non-reducing (1-&gt;4)-linked alpha-D-glucose residues with release of alpha-D-glucose.. Its function is as follows. Hydrolyzes a broad range of alpha-D-linked glucopyranosides, including maltose (alpha-1,4), sucrose (alpha-1,2), isomaltose (alpha-1,6) and turanose (alpha-1,3). The sequence is that of Alpha-glucosidase from Candida tsukubaensis (Yeast).